The sequence spans 277 residues: DNA polymerase epsilon subunit C (277 aa).

2 stretches are compositionally biased toward polar residues: residues 1–16 (MSSPMPQSSLNNSQVA) and 24–39 (ETPSTTPPMISNTNTP). The tract at residues 1–91 (MSSPMPQSSL…EEEEEEESLS (91 aa)) is disordered. The segment covering 69 to 89 (ENEDDDEQEEEEEEEEEEEES) has biased composition (acidic residues).

Heterotetramer. Consists of four subunits: POL2, DPB2, DPB3 and DPB4.

It localises to the nucleus. Its function is as follows. As accessory component of the DNA polymerase epsilon (DNA polymerase II) participates in chromosomal DNA replication. This is DNA polymerase epsilon subunit C (DPB3) from Debaryomyces hansenii (strain ATCC 36239 / CBS 767 / BCRC 21394 / JCM 1990 / NBRC 0083 / IGC 2968) (Yeast).